The chain runs to 457 residues: UPF0210 protein Sfum_2948 (457 aa).

It belongs to the UPF0210 family. As to quaternary structure, homodimer.

This chain is UPF0210 protein Sfum_2948, found in Syntrophobacter fumaroxidans (strain DSM 10017 / MPOB).